Consider the following 395-residue polypeptide: Elongation factor Tu (395 aa).

Residues 10–205 (KPHVNIGTIG…VDNWIPIPPR (196 aa)) enclose the tr-type G domain. The tract at residues 19 to 26 (GHVDHGKT) is G1. 19 to 26 (GHVDHGKT) is a GTP binding site. Threonine 26 contributes to the Mg(2+) binding site. A G2 region spans residues 60-64 (GITIN). The G3 stretch occupies residues 81 to 84 (DCPG). GTP-binding positions include 81-85 (DCPGH) and 136-139 (NKVD). The G4 stretch occupies residues 136–139 (NKVD). The G5 stretch occupies residues 174 to 176 (SAL).

The protein belongs to the TRAFAC class translation factor GTPase superfamily. Classic translation factor GTPase family. EF-Tu/EF-1A subfamily. As to quaternary structure, monomer.

The protein localises to the cytoplasm. It carries out the reaction GTP + H2O = GDP + phosphate + H(+). GTP hydrolase that promotes the GTP-dependent binding of aminoacyl-tRNA to the A-site of ribosomes during protein biosynthesis. The sequence is that of Elongation factor Tu from Hymenobacter ocellatus (Parahymenobacter ocellatus).